Consider the following 77-residue polypeptide: uncharacterized protein (77 aa).

Residues 49 to 71 (LVIASLILAIILLGILYYISYQM) traverse the membrane as a helical segment.

The protein resides in the membrane. This is an uncharacterized protein from Archaeoglobus fulgidus (strain ATCC 49558 / DSM 4304 / JCM 9628 / NBRC 100126 / VC-16).